Consider the following 417-residue polypeptide: Gamma-glutamyl phosphate reductase (417 aa).

This sequence belongs to the gamma-glutamyl phosphate reductase family.

The protein resides in the cytoplasm. It carries out the reaction L-glutamate 5-semialdehyde + phosphate + NADP(+) = L-glutamyl 5-phosphate + NADPH + H(+). The protein operates within amino-acid biosynthesis; L-proline biosynthesis; L-glutamate 5-semialdehyde from L-glutamate: step 2/2. In terms of biological role, catalyzes the NADPH-dependent reduction of L-glutamate 5-phosphate into L-glutamate 5-semialdehyde and phosphate. The product spontaneously undergoes cyclization to form 1-pyrroline-5-carboxylate. This Escherichia coli O17:K52:H18 (strain UMN026 / ExPEC) protein is Gamma-glutamyl phosphate reductase.